The primary structure comprises 276 residues: NH(3)-dependent NAD(+) synthetase (276 aa).

Residue 43–50 (GISGGVDS) coordinates ATP. Aspartate 49 is a Mg(2+) binding site. Residue arginine 146 participates in deamido-NAD(+) binding. Threonine 166 is a binding site for ATP. Mg(2+) is bound at residue glutamate 171. Positions 179 and 186 each coordinate deamido-NAD(+). Positions 195 and 217 each coordinate ATP. Deamido-NAD(+) is bound at residue 266-267 (HK).

The protein belongs to the NAD synthetase family. In terms of assembly, homodimer.

The catalysed reaction is deamido-NAD(+) + NH4(+) + ATP = AMP + diphosphate + NAD(+) + H(+). It participates in cofactor biosynthesis; NAD(+) biosynthesis; NAD(+) from deamido-NAD(+) (ammonia route): step 1/1. In terms of biological role, catalyzes the ATP-dependent amidation of deamido-NAD to form NAD. Uses ammonia as a nitrogen source. This chain is NH(3)-dependent NAD(+) synthetase, found in Vibrio parahaemolyticus serotype O3:K6 (strain RIMD 2210633).